We begin with the raw amino-acid sequence, 820 residues long: Protein bicaudal D homolog 2 (820 aa).

Serine 2 is modified (N-acetylserine). A coiled-coil region spans residues 20 to 270 (EWLRAEVKRL…LSHYMSINDS (251 aa)). Residues 25–400 (EVKRLSHELA…RLTENLSALR (376 aa)) are interaction with DYNLL1, DYNC1H1, DYNC1I2, DCTN1 and DCTN2. 3 positions are modified to phosphoserine: serine 190, serine 224, and serine 320. Residues 313–332 (SSLDNKTSTPRKDGLAPPSP) are disordered. The residue at position 321 (threonine 321) is a Phosphothreonine. The interaction with KIF5A stretch occupies residues 336 to 595 (SDLLSELHIS…LLATEVGRAD (260 aa)). A coiled-coil region spans residues 340-539 (SELHISEIQK…VTFSEELANL (200 aa)). Phosphoserine is present on residues serine 345 and serine 397. Disordered regions lie at residues 400–427 (RRLQAGKERQTSLDNEKDRDSHEDGDYY), 563–582 (QGKAGRTSPEGRGRRSPVLL), 591–618 (VGRADGGTGDNSPSPSSSLPSPLSDPRR), and 799–820 (HEQTRRGRSKAASKAKPASPSL). Over residues 404 to 424 (AGKERQTSLDNEKDRDSHEDG) the composition is skewed to basic and acidic residues. A phosphoserine mark is found at serine 570 and serine 578. Positions 586-820 (LLATEVGRAD…SKAKPASPSL (235 aa)) are interaction with RANBP2. At threonine 598 the chain carries Phosphothreonine. Positions 602 to 614 (SPSPSSSLPSPLS) are enriched in low complexity. Positions 662–804 (DKDKEALMEE…LELDHEQTRR (143 aa)) form a coiled coil. An interaction with RAB6A region spans residues 662-810 (DKDKEALMEE…QTRRGRSKAA (149 aa)). Serine 819 is modified (phosphoserine).

The protein belongs to the BicD family. As to quaternary structure, part of a tripartite complex with dynein and dynactin, acts an adapter linking the dynein motor complex and dynactin. Interacts with CPNE4 (via VWFA domain). Interacts with NEK9. Interacts with DCTN2. Interacts with RAB6A. Interacts with DNAI1. Interacts with DYNLL1, DYNC1H1, DYNC1I2 and DCTN1. Forms a complex with dynein and dynactin. The dynein-dynactin-BICD2 ternary complex (DDB) binds preferentially to tyrosinated microtubules than to detyrosinated microtubules. Interacts with RANBP2, RAB6A and KIF5A. Interacts with KIF1C. Post-translationally, phosphorylated by NEK9 in vitro. Ubiquitously expressed with high expression in the spinal cord.

The protein localises to the golgi apparatus. The protein resides in the cytoplasm. It is found in the cytoskeleton. Its subcellular location is the nucleus. It localises to the nuclear pore complex. The protein localises to the nucleus envelope. Functionally, acts as an adapter protein linking the dynein motor complex to various cargos and converts dynein from a non-processive to a highly processive motor in the presence of dynactin. Facilitates and stabilizes the interaction between dynein and dynactin and activates dynein processivity (the ability to move along a microtubule for a long distance without falling off the track). Facilitates the binding of RAB6A to the Golgi by stabilizing its GTP-bound form. Regulates coat complex coatomer protein I (COPI)-independent Golgi-endoplasmic reticulum transport via its interaction with RAB6A and recruitment of the dynein-dynactin motor complex. Contributes to nuclear and centrosomal positioning prior to mitotic entry through regulation of both dynein and kinesin-1. During G2 phase of the cell cycle, associates with RANBP2 at the nuclear pores and recruits dynein and dynactin to the nuclear envelope to ensure proper positioning of the nucleus relative to centrosomes prior to the onset of mitosis. This Mus musculus (Mouse) protein is Protein bicaudal D homolog 2 (Bicd2).